The chain runs to 334 residues: GTPase Obg (334 aa).

The region spanning 1 to 159 (MRFVDEVVIK…KEVRLELNLL (159 aa)) is the Obg domain. The OBG-type G domain occupies 160–331 (ADVALLGLPN…LAKKLNEFLQ (172 aa)). GTP-binding positions include 166–173 (GLPNAGKS), 191–195 (FTTMY), 212–215 (DIPG), 282–285 (NKID), and 312–314 (SAA). 2 residues coordinate Mg(2+): Ser-173 and Thr-193.

This sequence belongs to the TRAFAC class OBG-HflX-like GTPase superfamily. OBG GTPase family. In terms of assembly, monomer. Mg(2+) serves as cofactor.

Its subcellular location is the cytoplasm. An essential GTPase which binds GTP, GDP and possibly (p)ppGpp with moderate affinity, with high nucleotide exchange rates and a fairly low GTP hydrolysis rate. Plays a role in control of the cell cycle, stress response, ribosome biogenesis and in those bacteria that undergo differentiation, in morphogenesis control. The sequence is that of GTPase Obg from Francisella tularensis subsp. tularensis (strain FSC 198).